A 322-amino-acid polypeptide reads, in one-letter code: MMESGEALLKKLDGRLSGLRGRLTPDTGMDKITWFRAGGPAQVLFQPSDEEDLSAFLKAVPEEIPLLVVGIGSNLLVRDGGVPGFVVRLSAKGFGEVEQVCDTQLRAGAAAPDKRVAAAALEAGLADFHFYHGIPGGIGGALRMNAGANGVETRERVVEVRALDRKGEVHVLSNADMGYAYRHSSASPDLIFTSVLFEGVPGERDDIRRAMDEVQHHRETVQPVREKTGGSTFKNPEGTSAWKEIDKAGCRGLRVGGAQMSEMHCNFMINTGNATGHDLETLGETVRARVFENSGIRLHWEIKRLGLFREGEQIEEFLGKII.

The region spanning 36–202 (RAGGPAQVLF…TSVLFEGVPG (167 aa)) is the FAD-binding PCMH-type domain. Residue Arg182 is part of the active site. Catalysis depends on Ser231, which acts as the Proton donor. The active site involves Glu301.

This sequence belongs to the MurB family. It depends on FAD as a cofactor.

It localises to the cytoplasm. The catalysed reaction is UDP-N-acetyl-alpha-D-muramate + NADP(+) = UDP-N-acetyl-3-O-(1-carboxyvinyl)-alpha-D-glucosamine + NADPH + H(+). It functions in the pathway cell wall biogenesis; peptidoglycan biosynthesis. Functionally, cell wall formation. The chain is UDP-N-acetylenolpyruvoylglucosamine reductase from Brucella canis (strain ATCC 23365 / NCTC 10854 / RM-666).